Here is a 438-residue protein sequence, read N- to C-terminus: Trigger factor (438 aa).

The PPIase FKBP-type domain occupies 160-245 (DDKVTIDFVG…VKKIQQAELP (86 aa)).

Belongs to the FKBP-type PPIase family. Tig subfamily.

Its subcellular location is the cytoplasm. The enzyme catalyses [protein]-peptidylproline (omega=180) = [protein]-peptidylproline (omega=0). Functionally, involved in protein export. Acts as a chaperone by maintaining the newly synthesized protein in an open conformation. Functions as a peptidyl-prolyl cis-trans isomerase. This is Trigger factor from Francisella tularensis subsp. holarctica (strain LVS).